Here is a 305-residue protein sequence, read N- to C-terminus: tRNA dimethylallyltransferase (305 aa).

8–15 (GPTASGKT) is an ATP binding site. 10–15 (TASGKT) contributes to the substrate binding site. The interaction with substrate tRNA stretch occupies residues 33 to 36 (DSQQ).

The protein belongs to the IPP transferase family. As to quaternary structure, monomer. Mg(2+) serves as cofactor.

The catalysed reaction is adenosine(37) in tRNA + dimethylallyl diphosphate = N(6)-dimethylallyladenosine(37) in tRNA + diphosphate. Functionally, catalyzes the transfer of a dimethylallyl group onto the adenine at position 37 in tRNAs that read codons beginning with uridine, leading to the formation of N6-(dimethylallyl)adenosine (i(6)A). The polypeptide is tRNA dimethylallyltransferase (Anaeromyxobacter dehalogenans (strain 2CP-1 / ATCC BAA-258)).